Here is a 730-residue protein sequence, read N- to C-terminus: Protein folded gastrulation (730 aa).

The signal sequence occupies residues 1 to 21; it reads MSPPNCLLAVLALTVFIGANN. Residues N51 and N193 are each glycosylated (N-linked (GlcNAc...) asparagine). A compositionally biased stretch (low complexity) spans 197-211; that stretch reads TPETSTSITPTSTTT. Residues 197 to 222 are disordered; it reads TPETSTSITPTSTTTFAVPSVPSGEA. N-linked (GlcNAc...) asparagine glycans are attached at residues N252 and N289. Residues 361–385 are compositionally biased toward acidic residues; sequence ELEEEVGEEEVTATDILPSEEDEYT. The tract at residues 361–424 is disordered; that stretch reads ELEEEVGEEE…SPHPPEEPEI (64 aa). Residues 386 to 415 are compositionally biased toward low complexity; it reads TETATTTGDTTVAEASMDTSTATSTSGQSS. Residue N459 is glycosylated (N-linked (GlcNAc...) asparagine). Disordered stretches follow at residues 474–526 and 545–583; these read EDES…GGHK and KGKQ…TTTT. The segment covering 478 to 491 has biased composition (low complexity); that stretch reads STTTATPEPSSSTP. Positions 504–513 are enriched in polar residues; sequence DNDNLMTNTI. Residues 567–583 show a composition bias toward low complexity; it reads TSALTSTSTEDATTTTT. Residues N590 and N639 are each glycosylated (N-linked (GlcNAc...) asparagine). Positions 663–676 are enriched in low complexity; that stretch reads SAASTESAGTAATT. The segment at 663–683 is disordered; that stretch reads SAASTESAGTAATTPNSSSNP. N-linked (GlcNAc...) asparagine glycosylation occurs at N678.

Post-translationally, may be highly O-glycosylated in its Ser/Thr-rich C-terminal part. Expressed in the invagination primordia in a pattern that precisely precedes the pattern of constrictions.

It is found in the secreted. The protein localises to the extracellular space. The protein resides in the extracellular matrix. In terms of biological role, coordinates cell shape changes during formation of the ventral furrow and invagination of the posterior midgut primordium, by inducing apical constriction of cells in spatially and temporally defined manners. Could function as a secreted signal to initiate apical constriction by acting as a ligand for an unidentified G protein-coupled receptor, which in turn activates the G protein alpha subunit encoded by concertina, in neighboring cells. Such an intracellular pathway would ultimately induce contraction of the apical actin-myosin network. In the ventral furrow, fog appears to ensure that all the cells initiate constriction within several minutes of each other. In the posterior midgut invagination, fog appears to direct the ordered progression of constriction initiations out from a central region and also to delimit the peripheral extent of this spreading. This is Protein folded gastrulation (fog) from Drosophila melanogaster (Fruit fly).